The sequence spans 199 residues: Dephospho-CoA kinase (199 aa).

The DPCK domain occupies 3 to 199 (ILGLTGSIGM…EVVKMPQRRA (197 aa)). 11–16 (GMGKST) lines the ATP pocket.

The protein belongs to the CoaE family.

Its subcellular location is the cytoplasm. It carries out the reaction 3'-dephospho-CoA + ATP = ADP + CoA + H(+). The protein operates within cofactor biosynthesis; coenzyme A biosynthesis; CoA from (R)-pantothenate: step 5/5. In terms of biological role, catalyzes the phosphorylation of the 3'-hydroxyl group of dephosphocoenzyme A to form coenzyme A. The polypeptide is Dephospho-CoA kinase (Bradyrhizobium diazoefficiens (strain JCM 10833 / BCRC 13528 / IAM 13628 / NBRC 14792 / USDA 110)).